A 139-amino-acid chain; its full sequence is Protein archease (139 aa).

Positions 12, 138, and 139 each coordinate Ca(2+).

This sequence belongs to the archease family.

Its function is as follows. Activates the tRNA-splicing ligase complex by facilitating the enzymatic turnover of catalytic subunit RtcB. Acts by promoting the guanylylation of RtcB, a key intermediate step in tRNA ligation. Can also alter the NTP specificity of RtcB such that ATP, dGTP or ITP is used efficiently. This chain is Protein archease, found in Saccharolobus islandicus (strain Y.G.57.14 / Yellowstone #1) (Sulfolobus islandicus).